The following is a 379-amino-acid chain: Chaperone protein DnaJ (379 aa).

Positions 7-72 constitute a J domain; that stretch reads DYYEVLGVDK…KKRSMYDQFG (66 aa). The segment at 147 to 225 adopts a CR-type zinc-finger fold; it reads GKKAELSYTR…CGGNGLERKK (79 aa). Zn(2+)-binding residues include Cys-160, Cys-163, Cys-177, Cys-180, Cys-199, Cys-202, Cys-213, and Cys-216. CXXCXGXG motif repeat units lie at residues 160 to 167, 177 to 184, 199 to 206, and 213 to 220; these read CSECHGTG, CPDCKGTG, CPTCGGEG, and CKKCGGNG.

This sequence belongs to the DnaJ family. In terms of assembly, homodimer. Zn(2+) serves as cofactor.

It is found in the cytoplasm. Its function is as follows. Participates actively in the response to hyperosmotic and heat shock by preventing the aggregation of stress-denatured proteins and by disaggregating proteins, also in an autonomous, DnaK-independent fashion. Unfolded proteins bind initially to DnaJ; upon interaction with the DnaJ-bound protein, DnaK hydrolyzes its bound ATP, resulting in the formation of a stable complex. GrpE releases ADP from DnaK; ATP binding to DnaK triggers the release of the substrate protein, thus completing the reaction cycle. Several rounds of ATP-dependent interactions between DnaJ, DnaK and GrpE are required for fully efficient folding. Also involved, together with DnaK and GrpE, in the DNA replication of plasmids through activation of initiation proteins. The chain is Chaperone protein DnaJ from Treponema denticola (strain ATCC 35405 / DSM 14222 / CIP 103919 / JCM 8153 / KCTC 15104).